Here is a 439-residue protein sequence, read N- to C-terminus: UDP-N-acetylmuramoylalanine--D-glutamate ligase (439 aa).

An ATP-binding site is contributed by 112–118 (GSNGKST).

The protein belongs to the MurCDEF family.

It is found in the cytoplasm. The enzyme catalyses UDP-N-acetyl-alpha-D-muramoyl-L-alanine + D-glutamate + ATP = UDP-N-acetyl-alpha-D-muramoyl-L-alanyl-D-glutamate + ADP + phosphate + H(+). It functions in the pathway cell wall biogenesis; peptidoglycan biosynthesis. Its function is as follows. Cell wall formation. Catalyzes the addition of glutamate to the nucleotide precursor UDP-N-acetylmuramoyl-L-alanine (UMA). The polypeptide is UDP-N-acetylmuramoylalanine--D-glutamate ligase (Mannheimia succiniciproducens (strain KCTC 0769BP / MBEL55E)).